Here is a 290-residue protein sequence, read N- to C-terminus: UPF0761 membrane protein YihY (290 aa).

A run of 6 helical transmembrane segments spans residues 44 to 64 (LLSLVPLVAVVFALFAAFPMF), 104 to 124 (VGACGLIVTALLLMYSIDSAL), 140 to 160 (FAVYWMILTLGPLLAGASLAI), 183 to 203 (IFPLLLSWISFWLLYSIVPTI), 210 to 230 (AIVGAFVAALLFEAGKKGFAL), and 244 to 264 (VLAVIPILFVWVYWTWCIVLL).

This sequence belongs to the UPF0761 family.

The protein localises to the cell inner membrane. The protein is UPF0761 membrane protein YihY of Escherichia fergusonii (strain ATCC 35469 / DSM 13698 / CCUG 18766 / IAM 14443 / JCM 21226 / LMG 7866 / NBRC 102419 / NCTC 12128 / CDC 0568-73).